The chain runs to 173 residues: MLPPPPRQPPPQARAARGAVRLQRPFLRSPLGVLRLLQLLAGAAFWITIATSKYQGPVHFALFVSVLFWLLTLGLYFLTLLGKHELVPVLGSRWLMVNVAHDVLAAALYGAATGIMSDQMQRHSYCNLKDYPLPCAYHAFLAAAVCGGVCHGLYLLSALYGCGRRCQGKQEVA.

The residue at position 1 (Met1) is an N-acetylmethionine. Over 1-29 (MLPPPPRQPPPQARAARGAVRLQRPFLRS) the chain is Cytoplasmic. In terms of domain architecture, MARVEL spans 26–166 (FLRSPLGVLR…SALYGCGRRC (141 aa)). Residues 30-50 (PLGVLRLLQLLAGAAFWITIA) traverse the membrane as a helical segment. Residues 51–59 (TSKYQGPVH) lie on the Extracellular side of the membrane. A helical membrane pass occupies residues 60-80 (FALFVSVLFWLLTLGLYFLTL). Residues 81–94 (LGKHELVPVLGSRW) are Cytoplasmic-facing. A helical transmembrane segment spans residues 95–115 (LMVNVAHDVLAAALYGAATGI). At 116–138 (MSDQMQRHSYCNLKDYPLPCAYH) the chain is on the extracellular side. A helical transmembrane segment spans residues 139–159 (AFLAAAVCGGVCHGLYLLSAL). The Cytoplasmic portion of the chain corresponds to 160-173 (YGCGRRCQGKQEVA).

As to expression, widely expressed in normal tissues. Down-regulated in multiple primary tumors.

It localises to the cell membrane. The protein localises to the cytoplasm. It is found in the cytoskeleton. Its subcellular location is the nucleus. Its function is as follows. Microtubule-associated protein that exhibits cell cycle-dependent localization and can inhibit cell proliferation and migration. This is MARVEL domain-containing protein 1 (MARVELD1) from Homo sapiens (Human).